The following is a 299-amino-acid chain: MNSPPVDAMITGESSSQRSIPTPFLTKTFNLVEDSSIDDVISWNEDGSSFIVWNPTDFAKDLLPKHFKHNNFSSFVRQLNTYGFKKVVPDRWEFSNDFFKRGEKRLLREIQRRKITTTHQTVVAPSSEQRNQTMVVSPSNSGEDNNNNQVMSSSPSSWYCHQTKTTGNGGLSVELLEENEKLRSQNIQLNRELTQMKSICDNIYSLMSNYVGSQPTDRSYSPGGSSSQPMEFLPAKRFSEMEIEEEEEASPRLFGVPIGLKRTRSEGVQVKTTAVVGENSDEETPWLRHYNRTNQRVCN.

Residues 21–115 mediate DNA binding; sequence PTPFLTKTFN…LLREIQRRKI (95 aa). The tract at residues 119–157 is disordered; the sequence is HQTVVAPSSEQRNQTMVVSPSNSGEDNNNNQVMSSSPSS. Residues 166–211 are hydrophobic repeat HR-A/B; that stretch reads TGNGGLSVELLEENEKLRSQNIQLNRELTQMKSICDNIYSLMSNYV. A Nuclear localization signal motif is present at residues 261–264; the sequence is KRTR.

The protein belongs to the HSF family. Class B subfamily. In terms of assembly, homotrimer. Exhibits temperature-dependent phosphorylation.

The protein resides in the nucleus. Functionally, transcriptional regulator that specifically binds DNA sequence 5'-AGAAnnTTCT-3' known as heat shock promoter elements (HSE). The protein is Heat stress transcription factor B-2a (HSFB2A) of Arabidopsis thaliana (Mouse-ear cress).